A 160-amino-acid polypeptide reads, in one-letter code: Protein max (160 aa).

The span at M1 to E13 shows a compositional bias: acidic residues. The tract at residues M1–K40 is disordered. S2 bears the N-acetylserine mark. Phosphoserine is present on residues S2 and S11. Residues D23–M74 enclose the bHLH domain. The span at N29–K40 shows a compositional bias: basic and acidic residues. An N6-acetyllysine modification is found at K66. The segment at H81–L102 is leucine-zipper. A disordered region spans residues E103–S160. A Phosphoserine modification is found at S107. Residues S107–S132 show a composition bias toward polar residues. The Nuclear localization signal motif lies at R152–R156. An N6-acetyllysine mark is found at K153 and K154.

Belongs to the MAX family. Efficient DNA binding requires dimerization with another bHLH protein. Binds DNA as a heterodimer with MYC or MAD. Part of the E2F6.com-1 complex in G0 phase composed of E2F6, MGA, MAX, TFDP1, CBX3, BAT8, EUHMTASE1, RING1, RNF2, MBLR, L3MBTL2 and YAF2. Component of some MLL1/MLL complex, at least composed of the core components KMT2A/MLL1, ASH2L, HCFC1/HCF1, WDR5 and RBBP5, as well as the facultative components BACC1, CHD8, E2F6, HSP70, INO80C, KANSL1, LAS1L, MAX, MCRS1, MGA, MYST1/MOF, PELP1, PHF20, PRP31, RING2, RUVB1/TIP49A, RUVB2/TIP49B, SENP3, TAF1, TAF4, TAF6, TAF7, TAF9 and TEX10. Interacts with SPAG9. The heterodimer MYC:MAX interacts with ABI1; the interaction may enhance MYC:MAX transcriptional activity. In terms of processing, reversible lysine acetylation might regulate the nuclear-cytoplasmic shuttling of specific Max complexes. In terms of tissue distribution, high levels found in the brain, heart and lung while lower levels are seen in the liver, kidney and skeletal muscle.

The protein resides in the nucleus. The protein localises to the cell projection. It is found in the dendrite. In terms of biological role, transcription regulator. Forms a sequence-specific DNA-binding protein complex with MYC or MAD which recognizes the core sequence 5'-CAC[GA]TG-3'. The MYC:MAX complex is a transcriptional activator, whereas the MAD:MAX complex is a repressor. May repress transcription via the recruitment of a chromatin remodeling complex containing H3 'Lys-9' histone methyltransferase activity. Represses MYC transcriptional activity from E-box elements. The sequence is that of Protein max from Homo sapiens (Human).